The sequence spans 959 residues: Glycine dehydrogenase (decarboxylating) (959 aa).

Lys707 is modified (N6-(pyridoxal phosphate)lysine).

Belongs to the GcvP family. In terms of assembly, the glycine cleavage system is composed of four proteins: P, T, L and H. Pyridoxal 5'-phosphate serves as cofactor.

The catalysed reaction is N(6)-[(R)-lipoyl]-L-lysyl-[glycine-cleavage complex H protein] + glycine + H(+) = N(6)-[(R)-S(8)-aminomethyldihydrolipoyl]-L-lysyl-[glycine-cleavage complex H protein] + CO2. Its function is as follows. The glycine cleavage system catalyzes the degradation of glycine. The P protein binds the alpha-amino group of glycine through its pyridoxal phosphate cofactor; CO(2) is released and the remaining methylamine moiety is then transferred to the lipoamide cofactor of the H protein. In Photobacterium profundum (strain SS9), this protein is Glycine dehydrogenase (decarboxylating).